Reading from the N-terminus, the 67-residue chain is Large ribosomal subunit protein eL38 (67 aa).

Belongs to the eukaryotic ribosomal protein eL38 family.

The chain is Large ribosomal subunit protein eL38 (rpl38e) from Aeropyrum pernix (strain ATCC 700893 / DSM 11879 / JCM 9820 / NBRC 100138 / K1).